Consider the following 375-residue polypeptide: MNFSINRIVLLDNLSKAAKVIDYKNVNPSLSGIYLNVLNDQVNVITTSGILSFKSILNNQNSDLEVKQEGKVLLKPKYVLEMLRRLDDEFVVFSMVEDNELIIKTNNSDFSIGVLNSEDYPLIGFREKGIEFNLNPKEVKKTIYQVFVSMNENNKKLILTGLNLKLNNNQAIFSTTDSFRISQKILEIQSDNNEDIDITIPFKTALELPKLLDNAENLKIIIVEGYITFIIDNVIFQSNLIDGKFPNVQIAFPTKFETIITVKQKSILKVLSRFDLVADDGLPAIVNIKVNEDKIEFKSFISEVGKYEEDFDDFVIEGNKSLSISFNTRFLIDAIKTLSEDRIELKLINSTKPIVINNVYDEHLKQVILPTFLSN.

The protein belongs to the beta sliding clamp family. As to quaternary structure, forms a ring-shaped head-to-tail homodimer around DNA which binds and tethers DNA polymerases and other proteins to the DNA. The DNA replisome complex has a single clamp-loading complex (3 tau and 1 each of delta, delta', psi and chi subunits) which binds 3 Pol III cores (1 core on the leading strand and 2 on the lagging strand) each with a beta sliding clamp dimer. Additional proteins in the replisome are other copies of gamma, psi and chi, Ssb, DNA helicase and RNA primase.

The protein localises to the cytoplasm. Functionally, confers DNA tethering and processivity to DNA polymerases and other proteins. Acts as a clamp, forming a ring around DNA (a reaction catalyzed by the clamp-loading complex) which diffuses in an ATP-independent manner freely and bidirectionally along dsDNA. Initially characterized for its ability to contact the catalytic subunit of DNA polymerase III (Pol III), a complex, multichain enzyme responsible for most of the replicative synthesis in bacteria; Pol III exhibits 3'-5' exonuclease proofreading activity. The beta chain is required for initiation of replication as well as for processivity of DNA replication. The sequence is that of Beta sliding clamp (dnaN) from Mycoplasma capricolum subsp. capricolum (strain California kid / ATCC 27343 / NCTC 10154).